Reading from the N-terminus, the 179-residue chain is Caveolin-1 (179 aa).

N-acetylserine is present on Ser2. Ser2 carries the phosphoserine modification. A required for homooligomerization region spans residues 2–95 (SGGKYVDSEG…WKASFTTFTV (94 aa)). Residues 2–105 (SGGKYVDSEG…TKYWFYRLLS (104 aa)) are Cytoplasmic-facing. Lys5 carries the N6-acetyllysine; alternate modification. Lys5 is covalently cross-linked (Glycyl lysine isopeptide (Lys-Gly) (interchain with G-Cter in ubiquitin); alternate). Tyr6 bears the Phosphotyrosine mark. Ser9 is modified (phosphoserine). The residue at position 14 (Tyr14) is a Phosphotyrosine; by ABL1. Tyr25 is modified (phosphotyrosine). Glycyl lysine isopeptide (Lys-Gly) (interchain with G-Cter in ubiquitin) cross-links involve residues Lys26 and Lys30. Ser37 bears the Phosphoserine mark. Glycyl lysine isopeptide (Lys-Gly) (interchain with G-Cter in ubiquitin) cross-links involve residues Lys39, Lys48, and Lys58. Residues 83–95 (DGIWKASFTTFTV) are interaction with CAVIN3. Positions 106–126 (ALFGIPMALIWGIYFAILSFL) form an intramembrane region, helical. Residues 127-179 (HIWAVVPCIKSFLIEIQCISRVYSIYVHTFCDPLFEAIGKVFSNIRINMQKEI) lie on the Cytoplasmic side of the membrane. Residues 132 to 143 (VPCIKSFLIEIQ) are interacts with SPRY1, SPRY2, SPRY3 and SPRY4. S-palmitoyl cysteine attachment occurs at residues Cys134, Cys144, and Cys157. The interacts with SPRY1, SPRY2, and SPRY4 stretch occupies residues 150–161 (SIYVHTFCDPLF). The interacts with SPRY1, SPRY2, SPRY3 and SPRY4 stretch occupies residues 168-179 (FSNIRINMQKEI).

This sequence belongs to the caveolin family. In terms of assembly, homooligomer. Interacts with GLIPR2. Interacts with NOSTRIN. Interacts with SNAP25 and STX1A. Interacts (via the N-terminus) with DPP4; the interaction is direct. Interacts with CTNNB1, CDH1 and JUP. Interacts with PACSIN2; this interaction induces membrane tubulation. Interacts with SLC7A9. Interacts with BMX and BTK. Interacts with TGFBR1. Interacts with CAVIN3 (via leucine-zipper domain) in a cholesterol-sensitive manner. Interacts with CAVIN1. Interacts with EHD2 in a cholesterol-dependent manner. Forms a ternary complex with UBXN6 and VCP; mediates CAV1 targeting to lysosomes for degradation. Interacts with ABCG1; this interaction regulates ABCG1-mediated cholesterol efflux. Interacts with NEU3; this interaction enhances NEU3 sialidase activity within caveola. Interacts (via C-terminus) with SPRY1, SPRY2 (via C-terminus), SPRY3, and SPRY4. Interacts with IGFBP5; this interaction allows trafficking of IGFBP5 from the plasma membrane to the nucleus. Post-translationally, phosphorylated at Tyr-14 by ABL1 in response to oxidative stress. In terms of processing, ubiquitinated. Undergo monoubiquitination and multi- and/or polyubiquitination. Monoubiquitination of N-terminal lysines promotes integration in a ternary complex with UBXN6 and VCP which promotes oligomeric CAV1 targeting to lysosomes for degradation. Ubiquitinated by ZNRF1; leading to degradation and modulation of the TLR4-mediated immune response.

Its subcellular location is the golgi apparatus membrane. It localises to the cell membrane. It is found in the membrane. The protein localises to the caveola. The protein resides in the membrane raft. Functionally, may act as a scaffolding protein within caveolar membranes. Forms a stable heterooligomeric complex with CAV2 that targets to lipid rafts and drives caveolae formation. Mediates the recruitment of CAVIN proteins (CAVIN1/2/3/4) to the caveolae. Interacts directly with G-protein alpha subunits and can functionally regulate their activity. Involved in the costimulatory signal essential for T-cell receptor (TCR)-mediated T-cell activation. Its binding to DPP4 induces T-cell proliferation and NF-kappa-B activation in a T-cell receptor/CD3-dependent manner. Recruits CTNNB1 to caveolar membranes and may regulate CTNNB1-mediated signaling through the Wnt pathway. Negatively regulates TGFB1-mediated activation of SMAD2/3 by mediating the internalization of TGFBR1 from membrane rafts leading to its subsequent degradation. Binds 20(S)-hydroxycholesterol (20(S)-OHC). This chain is Caveolin-1 (CAV1), found in Eulemur macaco macaco (Black lemur).